The primary structure comprises 190 residues: RNA-binding protein OPG065 (190 aa).

A Z-binding domain is found at 5–70 (YIDERSNAEI…DIPPRWFMTT (66 aa)). Residues 117–184 (NPVTVINEYC…AKLAVDKLLG (68 aa)) form the DRBM domain.

The protein belongs to the orthopoxvirus OPG065 family. In terms of assembly, interacts with host G1P2/ISG15. Interacts with host EIF2AK2/PKR. Interacts with host ZBP1.

Its function is as follows. RNA-binding protein that plays a role in the inhibition of multiple cellular antiviral responses activated by double-stranded RNA (dsRNA), such as inhibition of PKR activation, necroptosis, and IFN-mediated antiviral activities. Recognizes and binds Z-RNA structures via its Z-binding domain and dsRNA via its DRBM domain: RNA-binding activity is required to escape host ZBP1-dependent necroptosis. Mechanistically, the Z-binding domain binds Z-RNAs that are produced during vaccinia virus infection, thereby competing with Z-RNA detection by host ZBP1, suppressing ZBP1-dependent necroptosis. Acts as a key inhibitor of the interferon response by blocking the phosphorylation and subsequent activation of IRF3 and IRF7 kinases that are required for interferon-alpha gene expression. Inhibits NF-kappa-B activation and the ubiquitin-like protein ISG15, which is an early antiviral protein. The binding with host ISG15 subsequently blocks host ISGylation. The polypeptide is RNA-binding protein OPG065 (OPG065) (Vaccinia virus (strain Western Reserve) (VACV)).